The primary structure comprises 345 residues: Dihydroorotase (345 aa).

Zn(2+) is bound by residues H13 and H15. Substrate contacts are provided by residues 15–17 and N41; that span reads HLR. Residues K99, H136, and H174 each coordinate Zn(2+). K99 carries the N6-carboxylysine modification. H136 serves as a coordination point for substrate. Residue L219 participates in substrate binding. Residue D247 coordinates Zn(2+). The active site involves D247. 2 residues coordinate substrate: H251 and A263.

It belongs to the metallo-dependent hydrolases superfamily. DHOase family. Class II DHOase subfamily. Homodimer. Requires Zn(2+) as cofactor.

The enzyme catalyses (S)-dihydroorotate + H2O = N-carbamoyl-L-aspartate + H(+). The protein operates within pyrimidine metabolism; UMP biosynthesis via de novo pathway; (S)-dihydroorotate from bicarbonate: step 3/3. In terms of biological role, catalyzes the reversible cyclization of carbamoyl aspartate to dihydroorotate. The sequence is that of Dihydroorotase from Acaryochloris marina (strain MBIC 11017).